A 1032-amino-acid chain; its full sequence is Error-prone DNA polymerase (1032 aa).

It belongs to the DNA polymerase type-C family. DnaE2 subfamily.

It localises to the cytoplasm. The catalysed reaction is DNA(n) + a 2'-deoxyribonucleoside 5'-triphosphate = DNA(n+1) + diphosphate. DNA polymerase involved in damage-induced mutagenesis and translesion synthesis (TLS). It is not the major replicative DNA polymerase. This Hahella chejuensis (strain KCTC 2396) protein is Error-prone DNA polymerase.